The sequence spans 109 residues: MKRIKSGDEVIVIAGKSKGHIGKVLRVIDDAVVVEGGNLIKKHIKPNPQKPENKGGIIAREAPLHVSNVAHYNPVTKKADKVGFKYLESNGVSKKVRYYKSNNEIIDRI.

Belongs to the universal ribosomal protein uL24 family. In terms of assembly, part of the 50S ribosomal subunit.

One of two assembly initiator proteins, it binds directly to the 5'-end of the 23S rRNA, where it nucleates assembly of the 50S subunit. In terms of biological role, one of the proteins that surrounds the polypeptide exit tunnel on the outside of the subunit. This Legionella pneumophila subsp. pneumophila (strain Philadelphia 1 / ATCC 33152 / DSM 7513) protein is Large ribosomal subunit protein uL24.